The primary structure comprises 1098 residues: Gramicidin S synthase 1 (1098 aa).

The region spanning 538 to 612 (APRNEIEETL…QLVHYIKDSK (75 aa)) is the Carrier domain. Ser-573 carries the post-translational modification O-(pantetheine 4'-phosphoryl)serine.

This sequence belongs to the ATP-dependent AMP-binding enzyme family. As to quaternary structure, large multienzyme complex of GrsA and GrsB. Pantetheine 4'-phosphate serves as cofactor.

The enzyme catalyses L-phenylalanine + ATP + H2O = D-phenylalanine + AMP + diphosphate + H(+). Its pathway is antibiotic biosynthesis; gramicidin S biosynthesis. In the first step of peptide synthesis this enzyme activates phenylalanine and racemizes it to the D-isomer. This is Gramicidin S synthase 1 (grsA) from Brevibacillus brevis (Bacillus brevis).